The following is an 89-amino-acid chain: Small ribosomal subunit protein bS20 (89 aa).

This sequence belongs to the bacterial ribosomal protein bS20 family.

In terms of biological role, binds directly to 16S ribosomal RNA. The protein is Small ribosomal subunit protein bS20 of Helicobacter pylori (strain Shi470).